Reading from the N-terminus, the 284-residue chain is Large ribosomal subunit protein uL2 (284 aa).

Disordered regions lie at residues 28–50 and 232–284; these read ELEGSSSKRSVRPNKKLSFFKKS and RGTA…DRRK. The span at 36-46 shows a compositional bias: basic residues; that stretch reads RSVRPNKKLSF. Residues 240–250 are compositionally biased toward basic and acidic residues; sequence DHPHGGGEGRH. Basic residues predominate over residues 264 to 284; sequence KGLKTRDKRKSNKWIVKDRRK.

It belongs to the universal ribosomal protein uL2 family. In terms of assembly, part of the 50S ribosomal subunit. Forms a bridge to the 30S subunit in the 70S ribosome.

One of the primary rRNA binding proteins. Required for association of the 30S and 50S subunits to form the 70S ribosome, for tRNA binding and peptide bond formation. It has been suggested to have peptidyltransferase activity; this is somewhat controversial. Makes several contacts with the 16S rRNA in the 70S ribosome. This is Large ribosomal subunit protein uL2 from Chlamydia muridarum (strain MoPn / Nigg).